Here is a 443-residue protein sequence, read N- to C-terminus: Thymidine phosphorylase (443 aa).

It belongs to the thymidine/pyrimidine-nucleoside phosphorylase family. Homodimer.

The enzyme catalyses thymidine + phosphate = 2-deoxy-alpha-D-ribose 1-phosphate + thymine. Its pathway is pyrimidine metabolism; dTMP biosynthesis via salvage pathway; dTMP from thymine: step 1/2. In terms of biological role, the enzymes which catalyze the reversible phosphorolysis of pyrimidine nucleosides are involved in the degradation of these compounds and in their utilization as carbon and energy sources, or in the rescue of pyrimidine bases for nucleotide synthesis. In Shewanella baltica (strain OS223), this protein is Thymidine phosphorylase.